Consider the following 452-residue polypeptide: Prephenate dehydrogenase [NADP(+)] (452 aa).

14–43 (KVIGIIGLGDMGLLYANKFTDAGWGVICCD) contacts NADP(+). In terms of domain architecture, Prephenate/arogenate dehydrogenase spans 14 to 297 (KVIGIIGLGD…GKHTGLLLLD (284 aa)).

It belongs to the prephenate/arogenate dehydrogenase family.

It catalyses the reaction prephenate + NADP(+) = 3-(4-hydroxyphenyl)pyruvate + CO2 + NADPH. The protein operates within amino-acid biosynthesis; L-tyrosine biosynthesis; (4-hydroxyphenyl)pyruvate from prephenate (NADP(+) route): step 1/1. The polypeptide is Prephenate dehydrogenase [NADP(+)] (TYR1) (Saccharomyces cerevisiae (strain ATCC 204508 / S288c) (Baker's yeast)).